The primary structure comprises 159 residues: Cathelicidin-5 (159 aa).

Residues 1 to 29 form the signal peptide; sequence METQRASLSLGRWSLWLLLLGLALPSASA. A Pyrrolidone carboxylic acid modification is found at Gln30. Residues 30–131 constitute a propeptide that is removed on maturation; it reads QALSYREAVL…DITCAVPQSV (102 aa). 2 cysteine pairs are disulfide-bonded: Cys86–Cys97 and Cys108–Cys125.

This sequence belongs to the cathelicidin family.

The protein localises to the secreted. Exerts a potent antimicrobial activity against Gram-negative and Gram-positive bacteria, including methicillin-resistant Staphylococcus aureus, and fungi. This is Cathelicidin-5 (CATHL5) from Bos taurus (Bovine).